The primary structure comprises 362 residues: Bifunctional chorismate mutase/prephenate dehydratase (362 aa).

The region spanning 3–91 is the Chorismate mutase domain; sequence QTIDELLIPH…ECLAVERPLT (89 aa). Positions 13, 30, 41, and 52 each coordinate substrate. A Prephenate dehydratase domain is found at 92-269; that stretch reads IAYLGPQGTF…NTTRFLVMGH (178 aa). The ACT domain maps to 281-356; it reads SLAVSAPNRA…RASFVKAIGS (76 aa).

It is found in the cytoplasm. The enzyme catalyses chorismate = prephenate. The catalysed reaction is prephenate + H(+) = 3-phenylpyruvate + CO2 + H2O. It participates in amino-acid biosynthesis; L-phenylalanine biosynthesis; phenylpyruvate from prephenate: step 1/1. It functions in the pathway metabolic intermediate biosynthesis; prephenate biosynthesis; prephenate from chorismate: step 1/1. Functionally, catalyzes the Claisen rearrangement of chorismate to prephenate and the decarboxylation/dehydration of prephenate to phenylpyruvate. The polypeptide is Bifunctional chorismate mutase/prephenate dehydratase (pheA) (Neisseria gonorrhoeae (strain ATCC 700825 / FA 1090)).